A 108-amino-acid chain; its full sequence is TYRO protein tyrosine kinase-binding protein (108 aa).

Positions 1–25 (MEGLRPSDRLLSLLLTVGGLSLVLA) are cleaved as a signal peptide. Over 26-36 (QSECNCSSVSP) the chain is Extracellular. A helical membrane pass occupies residues 37–57 (GVLAGIVLGDLMLTLLIALAV). Aspartate 46 lines the Ca(2+) pocket. Over 58-108 (YYLGRLVPRGRGATEVTRKQHIPETESPYQELQGQRTDVYSDLNTQRPYYK) the chain is Cytoplasmic. Positions 71-108 (TEVTRKQHIPETESPYQELQGQRTDVYSDLNTQRPYYK) are disordered. The 29-residue stretch at 75–103 (RKQHIPETESPYQELQGQRTDVYSDLNTQ) folds into the ITAM domain. The span at 84–108 (SPYQELQGQRTDVYSDLNTQRPYYK) shows a compositional bias: polar residues. Residues tyrosine 86 and tyrosine 97 each carry the phosphotyrosine modification.

It belongs to the TYROBP family. Homodimer; disulfide-linked. Homotrimer; disulfide-linked. Homotetramer; disulfide-linked. Homotrimers and homotetramers form when low levels of partner receptors are available and is competitive with assembly with interacting receptors. They may represent alternative oligomerization states or may be intermediates in the receptor assembly process. Binding of a metal cation aids in homooligomerization through coordination of the metal ion by the subunits of the oligomer. Interacts with TREM1. Interacts with TREM2. Interacts with CLECSF5. Interacts with CD300LB and CD300C2. Interacts with CD300E. Interacts (via ITAM domain) with SYK (via SH2 domains); activates SYK mediating neutrophils and macrophages integrin-mediated activation. Interacts with KLRC2. Interacts with CD300H. Interacts with KLRD1. Interacts with SIGLEC1. In terms of processing, following ligand binding by associated receptors, tyrosine phosphorylated in the ITAM domain which leads to activation of additional tyrosine kinases and subsequent cell activation.

It is found in the cell membrane. Its function is as follows. Adapter protein which non-covalently associates with activating receptors found on the surface of a variety of immune cells to mediate signaling and cell activation following ligand binding by the receptors. TYROBP is tyrosine-phosphorylated in the ITAM domain following ligand binding by the associated receptors which leads to activation of additional tyrosine kinases and subsequent cell activation. Also has an inhibitory role in some cells. Non-covalently associates with activating receptors of the CD300 family to mediate cell activation. Also mediates cell activation through association with activating receptors of the CD200R family. Required for neutrophil activation mediated by integrin. Required for the activation of myeloid cells mediated by the CLEC5A/MDL1 receptor. Associates with natural killer (NK) cell receptors such as the KLRD1/KLRC2 heterodimer to mediate NK cell activation. Associates with TREM1 to mediate activation of neutrophils and monocytes. Associates with TREM2 on monocyte-derived dendritic cells to mediate up-regulation of chemokine receptor CCR7 and dendritic cell maturation and survival. Association with TREM2 mediates cytokine-induced formation of multinucleated giant cells which are formed by the fusion of macrophages. Stabilizes the TREM2 C-terminal fragment (TREM2-CTF) produced by TREM2 ectodomain shedding which suppresses the release of pro-inflammatory cytokines. In microglia, required with TREM2 for phagocytosis of apoptotic neurons. Required with ITGAM/CD11B in microglia to control production of microglial superoxide ions which promote the neuronal apoptosis that occurs during brain development. Promotes pro-inflammatory responses in microglia following nerve injury which accelerates degeneration of injured neurons. Positively regulates the expression of the IRAK3/IRAK-M kinase and IL10 production by liver dendritic cells and inhibits their T cell allosimulatory ability. Negatively regulates B cell proliferation. Required for CSF1-mediated osteoclast cytoskeletal organization. Positively regulates multinucleation during osteoclast development. The protein is TYRO protein tyrosine kinase-binding protein of Bos taurus (Bovine).